A 540-amino-acid chain; its full sequence is Phosphoenolpyruvate carboxykinase (ATP) (540 aa).

Position 65 (Arg-65) interacts with substrate. Lys-87 carries the N6-acetyllysine modification. Positions 207 and 213 each coordinate substrate. ATP is bound by residues Lys-213, His-232, and 248–256 (GLSGTGKTT). Mn(2+) is bound by residues Lys-213 and His-232. Residue Asp-269 coordinates Mn(2+). ATP contacts are provided by residues Glu-297, Arg-333, 449-450 (RI), and Thr-455. Arg-333 lines the substrate pocket. Position 523 is an N6-acetyllysine (Lys-523).

The protein belongs to the phosphoenolpyruvate carboxykinase (ATP) family. In terms of assembly, monomer. Mn(2+) is required as a cofactor.

It is found in the cytoplasm. The enzyme catalyses oxaloacetate + ATP = phosphoenolpyruvate + ADP + CO2. It functions in the pathway carbohydrate biosynthesis; gluconeogenesis. In terms of biological role, involved in the gluconeogenesis. Catalyzes the conversion of oxaloacetate (OAA) to phosphoenolpyruvate (PEP) through direct phosphoryl transfer between the nucleoside triphosphate and OAA. The chain is Phosphoenolpyruvate carboxykinase (ATP) from Escherichia coli O157:H7.